We begin with the raw amino-acid sequence, 61 residues long: Potassium channel toxin alpha-KTx 18.1 (61 aa).

The N-terminal stretch at 1-24 is a signal peptide; that stretch reads MRFTGIILILISMTLIDSFFEMKV. 3 disulfide bridges follow: Cys33–Cys52, Cys38–Cys57, and Cys42–Cys59.

As to expression, expressed by the venom gland.

The protein resides in the secreted. In terms of biological role, reversible blocker of both Kv1.3/KCNA3 potassium channels (high affinity) and Shaker B (mammalian Kv1.1 analog) potassium channels (very low affinity). The protein is Potassium channel toxin alpha-KTx 18.1 of Tityus obscurus (Amazonian scorpion).